Consider the following 101-residue polypeptide: MKPGEYDIQPGEIILNEGRARLTITVENSGDRPIQVGSHYHFYETNPALVFDREKTRGYRLNIAAGTAVRFEPGQDREVELVEVSGNKIIYGFRGEIMGEL.

This sequence belongs to the urease beta subunit family. As to quaternary structure, heterotrimer of UreA (gamma), UreB (beta) and UreC (alpha) subunits. Three heterotrimers associate to form the active enzyme.

The protein localises to the cytoplasm. The catalysed reaction is urea + 2 H2O + H(+) = hydrogencarbonate + 2 NH4(+). Its pathway is nitrogen metabolism; urea degradation; CO(2) and NH(3) from urea (urease route): step 1/1. This Saccharophagus degradans (strain 2-40 / ATCC 43961 / DSM 17024) protein is Urease subunit beta.